The following is a 348-amino-acid chain: Aminotransferase atnJ (348 aa).

A pyridoxal 5'-phosphate-binding site is contributed by R79. N6-(pyridoxal phosphate)lysine is present on K180. E216 lines the pyridoxal 5'-phosphate pocket.

It belongs to the class-IV pyridoxal-phosphate-dependent aminotransferase family. Pyridoxal 5'-phosphate is required as a cofactor.

It functions in the pathway secondary metabolite biosynthesis. Functionally, aminotransferase; part of the gene cluster that mediates the biosynthesis of aspercryptins, linear lipopeptides built from six amino acids including 2 highly unusual and nonproteogenic amino acids, 2-amino-octanoic acid (2aoa) and 2-amino-dodecanol (2adol). The core structure of aspercryptins is as follows: Ser/Ala-Thr-Ile/Val-2aoa-Asn-2adol. The first step of aspercryptin biosynthesis is the generation of the fatty acid precursors, octanoic and dodecanoic acids, by the FAS subunits atnF and atnM. The fatty acid precursors are likely transformed into the corresponding alpha-amino fatty acids in three steps. First, they are hydroxylated by the cytochrome P450 monooxygenase atnE, then oxidized to the corresponding alpha-keto acids by the NAD(P)-dependent oxidoreductase atnD, and finally converted to the alpha-amino fatty acids by the PLP-dependent aminotransferases atnH or atnJ. the alpha-amino fatty acids, 2-amino-octanoic and 2-amino-dodecanoic acids, are recognized, activated, and covalently tethered to the NRPS atnA by its fourth and sixth adenylation domains. The second module of atnA is the Thr module and contains an epimerase (E) domain responsible for the epimerization of Thr to D-allo-Thr. Additionally, despite atnA having only one epimerase domain, the first amino acid of aspercryptin A1 is D-Ser, suggesting that serine is either loaded directly as D-Ser on the first module or that the epimerase domain in the threonine module epimerizes both L-Ser and L-Thr. After condensation of the hexapeptide of aspercryptin, the C-terminal reductase (TE) domain might be involved in the reductive release and production of the aldehyde hexapeptide. Further reduction would generate aspercryptins. The variety of aspercryptins produced reflects the flexibility of the atnA NRPS, allowing incorporation of alanine instead of serine, valine for isoleucine, and a C10 fatty amino alcohol instead of the C12 version. AtnB seems to be involved in the selectivity for Ile versus Val by the third module. Moreover, type B, C and D aspercryptins have an additional N-terminal cichorine, acetyl and propionyl group respectively. The protein is Aminotransferase atnJ of Emericella nidulans (strain FGSC A4 / ATCC 38163 / CBS 112.46 / NRRL 194 / M139) (Aspergillus nidulans).